The sequence spans 307 residues: Glutaminase 1 (307 aa).

7 residues coordinate substrate: serine 62, asparagine 114, glutamate 159, asparagine 166, tyrosine 190, tyrosine 242, and valine 260.

The protein belongs to the glutaminase family. As to quaternary structure, homotetramer.

The enzyme catalyses L-glutamine + H2O = L-glutamate + NH4(+). The polypeptide is Glutaminase 1 (Clostridium perfringens (strain 13 / Type A)).